A 341-amino-acid chain; its full sequence is Methionine import ATP-binding protein MetN (341 aa).

The region spanning 2–237 (IELCGLKKSF…PESLARKMLY (236 aa)) is the ABC transporter domain. 34–41 (GKSGAGKS) serves as a coordination point for ATP.

It belongs to the ABC transporter superfamily. Methionine importer (TC 3.A.1.24) family. As to quaternary structure, the complex is composed of two ATP-binding proteins (MetN), two transmembrane proteins (MetI) and a solute-binding protein (MetQ).

The protein localises to the cell inner membrane. The catalysed reaction is L-methionine(out) + ATP + H2O = L-methionine(in) + ADP + phosphate + H(+). The enzyme catalyses D-methionine(out) + ATP + H2O = D-methionine(in) + ADP + phosphate + H(+). Its function is as follows. Part of the ABC transporter complex MetNIQ involved in methionine import. Responsible for energy coupling to the transport system. This is Methionine import ATP-binding protein MetN from Legionella pneumophila (strain Paris).